Here is an 876-residue protein sequence, read N- to C-terminus: Valine--tRNA ligase (876 aa).

Residues 44-54 (PNVTGKLHLGH) carry the 'HIGH' region motif. Positions 520–524 (KMSKS) match the 'KMSKS' region motif. K523 lines the ATP pocket. Residues 805-876 (LEGLIDMDKE…VKARIEQLKA (72 aa)) are a coiled coil.

Belongs to the class-I aminoacyl-tRNA synthetase family. ValS type 1 subfamily. Monomer.

The protein resides in the cytoplasm. It catalyses the reaction tRNA(Val) + L-valine + ATP = L-valyl-tRNA(Val) + AMP + diphosphate. In terms of biological role, catalyzes the attachment of valine to tRNA(Val). As ValRS can inadvertently accommodate and process structurally similar amino acids such as threonine, to avoid such errors, it has a 'posttransfer' editing activity that hydrolyzes mischarged Thr-tRNA(Val) in a tRNA-dependent manner. The chain is Valine--tRNA ligase from Staphylococcus aureus (strain bovine RF122 / ET3-1).